The sequence spans 639 residues: MAAPSGVPPLRVLEELGIGLSPTGEVTEAVTSEGAYYLEQVTITETSEDECEYEEIPDDNFSIPEGEEDLEKAIHIIGEQARDIHILEQQTILPARNVMQEAIEDFLCNFLIKMGMTRTLDCFQAEWYELIQKKGSDFKGLGNVPDVYSQVMLLETENKNLKKELKHFKQAAEKAKEDLLRTQKERDFHRMHHKRIVQEKNKLIADLKGLKLHYASYEPTIRVLHEKHHALLKEKMLTSLERDRAVGKISGLQATLKNIDMGHIQVPVIKGSYESASITRESGDRAGHSCEKENSSEGPTQKSLREAREEVGYKSKLKNEKKDSEFPVDMQPDPNVTSCTENVSAAKFDYKLNNIFRLHELPVSCIVMHPCRDYLISCSEDRLWKMVGLPQGNVLLTGSGHTDWLSGCCFHPSGSKLATSSGDSTIKLWDLNKGECTLTLEGHNHAVWSCTWHSCGDFVASASLDMTSKIWDVNSERCRYTLYGHTDSVNSIEFFPFSNILLTASADKTLSVWDARTGKCEQSLYGHMHSVNDATFTPRGHIIASCDARGVTKLWDFRKLIPIVSIDVGPSSGNEVNFDQSGRVLAQASANGIIHLLDLKSGQIHKLVGHESEVHSVVFSHLGENLYSGGSDGTIRLWI.

The stretch at 146–218 forms a coiled coil; it reads DVYSQVMLLE…GLKLHYASYE (73 aa). Positions 280–333 are disordered; it reads RESGDRAGHSCEKENSSEGPTQKSLREAREEVGYKSKLKNEKKDSEFPVDMQPD. Basic and acidic residues-rich tracts occupy residues 281–295 and 303–325; these read ESGD…KENS and SLRE…KDSE. 7 WD repeats span residues 358-397, 400-439, 442-481, 484-523, 526-565, 568-608, and 609-639; these read LHEL…VLLT, GHTD…CTLT, GHNH…CRYT, GHTD…CEQS, GHMH…PIVS, VGPS…HKLV, and GHES…RLWI.

Interacts with SPAG6 and STK36. In terms of processing, phosphorylated by TSSK2. Expressed in testis.

The protein localises to the cytoplasm. It is found in the cytoskeleton. It localises to the cilium axoneme. The protein resides in the flagellum axoneme. Its subcellular location is the cell projection. The protein localises to the cilium. It is found in the flagellum. Necessary for sperm flagellar function. Plays a role in motile ciliogenesis. May help to recruit STK36 to the cilium or apical surface of the cell to initiate subsequent steps of construction of the central pair apparatus of motile cilia. This Mus musculus (Mouse) protein is Sperm-associated antigen 16 protein (Spag16).